Reading from the N-terminus, the 294-residue chain is Cytidine deaminase (294 aa).

CMP/dCMP-type deaminase domains are found at residues 48 to 168 and 186 to 294; these read DEDA…FGPK and LTGD…VLLA. Position 89–91 (89–91) interacts with substrate; it reads NME. Position 102 (His-102) interacts with Zn(2+). Glu-104 serves as the catalytic Proton donor. 2 residues coordinate Zn(2+): Cys-129 and Cys-132.

It belongs to the cytidine and deoxycytidylate deaminase family. As to quaternary structure, homodimer. Zn(2+) is required as a cofactor.

It catalyses the reaction cytidine + H2O + H(+) = uridine + NH4(+). It carries out the reaction 2'-deoxycytidine + H2O + H(+) = 2'-deoxyuridine + NH4(+). This enzyme scavenges exogenous and endogenous cytidine and 2'-deoxycytidine for UMP synthesis. The polypeptide is Cytidine deaminase (Escherichia coli O157:H7).